Here is a 575-residue protein sequence, read N- to C-terminus: Mitochondrial 2-methylisocitrate lyase ICL2 (575 aa).

Residue cysteine 238 is part of the active site.

Belongs to the isocitrate lyase/PEP mutase superfamily. Isocitrate lyase family.

It localises to the mitochondrion matrix. The catalysed reaction is (2S,3R)-3-hydroxybutane-1,2,3-tricarboxylate = pyruvate + succinate. It functions in the pathway organic acid metabolism; propanoate degradation. Functionally, catalyzes the formation of pyruvate and succinate from 2-methylisocitrate during the metabolism of endogenous propionyl-CoA. Does not act on isocitrate. The polypeptide is Mitochondrial 2-methylisocitrate lyase ICL2 (ICL2) (Saccharomyces cerevisiae (strain ATCC 204508 / S288c) (Baker's yeast)).